The primary structure comprises 434 residues: Na(+)/H(+) antiporter NhaA 1 (434 aa).

A run of 10 helical transmembrane segments spans residues 30-50 (TGGLLLLVFTVIALVWANVAG), 70-90 (LSIEHWAADGLLAIFFFVTGL), 108-128 (ALPIAAAVGGMAVPALLFVLV), 141-161 (VGWATPTATDIAFALGILAVV), 172-192 (FLLTLAVVDDLLGITVIAIFY), 195-215 (QVHWTPLLLALLTLAAFTVAV), 286-306 (FAVPVFALFSAGVAIGGVSGF), 318-338 (VIAGLVLGKPIGIVGTTWLLA), 354-374 (VLGMAMLAGMGFTVSLLIGSL), and 386-406 (VTLGVLVGSLLSAVLAAVVLS).

Belongs to the NhaA Na(+)/H(+) (TC 2.A.33) antiporter family.

The protein resides in the cell membrane. The enzyme catalyses Na(+)(in) + 2 H(+)(out) = Na(+)(out) + 2 H(+)(in). Functionally, na(+)/H(+) antiporter that extrudes sodium in exchange for external protons. This chain is Na(+)/H(+) antiporter NhaA 1, found in Kineococcus radiotolerans (strain ATCC BAA-149 / DSM 14245 / SRS30216).